The following is a 1241-amino-acid chain: Sterol 3-beta-glucosyltransferase (1241 aa).

A compositionally biased stretch (acidic residues) spans 1 to 11 (MSGIESTEEPC). 2 disordered regions span residues 1 to 97 (MSGI…KPSI) and 124 to 189 (DQQV…TLRK). Residues 25 to 34 (PEERQTRKDS) show a composition bias toward basic and acidic residues. A compositionally biased stretch (acidic residues) spans 136–155 (ESEDQQADESSDEQEDDDQD). Residues 220-267 (NKLKRTFDISDTDVFISDYPCWLMGDVLLQGHLYITKHHILFFAFLPK) form the GRAM 1 domain. The PH domain occupies 271–373 (SISKSGALTT…WVSSLKKHIF (103 aa)). The disordered stretch occupies residues 499-556 (DDFSQEQESAESSKPVSDDEIVSADDNQELEEKQPQDNLANAEKENHDKVSRANSRRT). The segment covering 516–527 (DDEIVSADDNQE) has biased composition (acidic residues). Basic and acidic residues predominate over residues 540 to 549 (AEKENHDKVS). A GRAM 2 domain is found at 609–675 (ERFRKHFSLT…SDIENVNKEK (67 aa)). Residues 720–741 (KGSTDSSPPNASEGSSDESCNL) are disordered. The segment covering 723–741 (TDSSPPNASEGSSDESCNL) has biased composition (polar residues). Residues Ser797, Arg798, Asp800, Asn1071, Val1098, His1100, His1113, Ser1116, Gly1117, Thr1118, Asp1137, and Gln1138 each contribute to the UDP-alpha-D-glucose site.

Belongs to the glycosyltransferase 28 family.

The protein localises to the cytoplasm. The protein resides in the preautophagosomal structure membrane. The enzyme catalyses a sterol + UDP-alpha-D-glucose = a sterol 3-beta-D-glucoside + UDP + H(+). It carries out the reaction ergosterol + UDP-alpha-D-glucose = ergosteryl 3-beta-D-glucoside + UDP + H(+). In terms of biological role, sterol glycosyltransferase responsible for the glycosylation of ergosterol to form ergosterol-glucoside. Mediates autophagic degradation of peroxisomes (pexophagy). In Pichia angusta (Yeast), this protein is Sterol 3-beta-glucosyltransferase.